The chain runs to 240 residues: tRNA pseudouridine synthase B (240 aa).

Catalysis depends on aspartate 54, which acts as the Nucleophile.

The protein belongs to the pseudouridine synthase TruB family. Type 1 subfamily.

It carries out the reaction uridine(55) in tRNA = pseudouridine(55) in tRNA. Functionally, responsible for synthesis of pseudouridine from uracil-55 in the psi GC loop of transfer RNAs. This chain is tRNA pseudouridine synthase B, found in Chlorobaculum tepidum (strain ATCC 49652 / DSM 12025 / NBRC 103806 / TLS) (Chlorobium tepidum).